The following is a 488-amino-acid chain: Serine/threonine-protein kinase haspin homolog hrk1 (488 aa).

Residues 156 to 488 (TFEIQKIGEA…SLLNWVRQKY (333 aa)) enclose the Protein kinase domain. ATP contacts are provided by residues 162–170 (IGEASYSEV) and lysine 184. Catalysis depends on aspartate 305, which acts as the Proton acceptor.

The protein belongs to the protein kinase superfamily. Ser/Thr protein kinase family. Haspin subfamily. Interacts with pds5 and swi6.

The protein resides in the cytoplasm. The protein localises to the chromosome. It catalyses the reaction L-seryl-[protein] + ATP = O-phospho-L-seryl-[protein] + ADP + H(+). The enzyme catalyses L-threonyl-[protein] + ATP = O-phospho-L-threonyl-[protein] + ADP + H(+). Its function is as follows. Serine/threonine haspin-like protein kinase involved in cell cycle regulation. Acts in chromosomal passenger complex (CPC) targeting to centromeres by phosphorylating histone H3 at 'Thr3' (H3T3ph). This Schizosaccharomyces pombe (strain 972 / ATCC 24843) (Fission yeast) protein is Serine/threonine-protein kinase haspin homolog hrk1 (hrk1).